We begin with the raw amino-acid sequence, 197 residues long: MLERIKDSFTESIQTKIDASEALPESIAKAAEMMVNCLLGGNKILACGNGGSAGDAQHFSAELLNRYEIERPPLPAIALSCDTSTITAIANDYSYDEIFSKQIMALGQPGDILLAISTSGNSGNVIKAMEAALSRDMTIVSLTGKDGGAMAGLLSVNDVEIRVPSNVTARIQEVHLLAIHCLCDNIDRTLFPQDEQA.

One can recognise an SIS domain in the interval 34–196 (MVNCLLGGNK…DRTLFPQDEQ (163 aa)). 49 to 51 (NGG) is a substrate binding site. Histidine 58 and glutamate 62 together coordinate Zn(2+). Substrate contacts are provided by residues glutamate 62, 91–92 (ND), 117–119 (STS), serine 122, and glutamine 172. Glutamine 172 and histidine 180 together coordinate Zn(2+).

It belongs to the SIS family. GmhA subfamily. As to quaternary structure, homotetramer. Zn(2+) is required as a cofactor.

It is found in the cytoplasm. It catalyses the reaction 2 D-sedoheptulose 7-phosphate = D-glycero-alpha-D-manno-heptose 7-phosphate + D-glycero-beta-D-manno-heptose 7-phosphate. Its pathway is carbohydrate biosynthesis; D-glycero-D-manno-heptose 7-phosphate biosynthesis; D-glycero-alpha-D-manno-heptose 7-phosphate and D-glycero-beta-D-manno-heptose 7-phosphate from sedoheptulose 7-phosphate: step 1/1. Catalyzes the isomerization of sedoheptulose 7-phosphate in D-glycero-D-manno-heptose 7-phosphate. This Shewanella pealeana (strain ATCC 700345 / ANG-SQ1) protein is Phosphoheptose isomerase.